The following is a 153-amino-acid chain: SsrA-binding protein (153 aa).

Residues 133 to 143 are compositionally biased toward basic and acidic residues; that stretch reads ADLKERDDKRQ. Residues 133–153 are disordered; it reads ADLKERDDKRQMQQALKQQQY. The span at 144–153 shows a compositional bias: low complexity; that stretch reads MQQALKQQQY.

The protein belongs to the SmpB family.

The protein resides in the cytoplasm. Its function is as follows. Required for rescue of stalled ribosomes mediated by trans-translation. Binds to transfer-messenger RNA (tmRNA), required for stable association of tmRNA with ribosomes. tmRNA and SmpB together mimic tRNA shape, replacing the anticodon stem-loop with SmpB. tmRNA is encoded by the ssrA gene; the 2 termini fold to resemble tRNA(Ala) and it encodes a 'tag peptide', a short internal open reading frame. During trans-translation Ala-aminoacylated tmRNA acts like a tRNA, entering the A-site of stalled ribosomes, displacing the stalled mRNA. The ribosome then switches to translate the ORF on the tmRNA; the nascent peptide is terminated with the 'tag peptide' encoded by the tmRNA and targeted for degradation. The ribosome is freed to recommence translation, which seems to be the essential function of trans-translation. In Protochlamydia amoebophila (strain UWE25), this protein is SsrA-binding protein.